A 360-amino-acid polypeptide reads, in one-letter code: 1-deoxy-D-xylulose 5-phosphate reductoisomerase (360 aa).

NADPH is bound by residues serine 7, glycine 8, serine 9, isoleucine 10, and asparagine 115. Residue lysine 116 participates in 1-deoxy-D-xylulose 5-phosphate binding. Glutamate 117 is an NADPH binding site. Residue aspartate 135 participates in Mn(2+) binding. Residues serine 136, glutamate 137, serine 159, and histidine 182 each coordinate 1-deoxy-D-xylulose 5-phosphate. Glutamate 137 is a binding site for Mn(2+). Position 188 (glycine 188) interacts with NADPH. 1-deoxy-D-xylulose 5-phosphate is bound by residues serine 195, asparagine 200, lysine 201, and glutamate 204. Glutamate 204 lines the Mn(2+) pocket.

It belongs to the DXR family. Mg(2+) serves as cofactor. The cofactor is Mn(2+).

It carries out the reaction 2-C-methyl-D-erythritol 4-phosphate + NADP(+) = 1-deoxy-D-xylulose 5-phosphate + NADPH + H(+). The protein operates within isoprenoid biosynthesis; isopentenyl diphosphate biosynthesis via DXP pathway; isopentenyl diphosphate from 1-deoxy-D-xylulose 5-phosphate: step 1/6. Catalyzes the NADPH-dependent rearrangement and reduction of 1-deoxy-D-xylulose-5-phosphate (DXP) to 2-C-methyl-D-erythritol 4-phosphate (MEP). The sequence is that of 1-deoxy-D-xylulose 5-phosphate reductoisomerase from Campylobacter fetus subsp. fetus (strain 82-40).